The sequence spans 143 residues: Anti-sigma F factor (143 aa).

This sequence belongs to the anti-sigma-factor family.

The catalysed reaction is L-seryl-[protein] + ATP = O-phospho-L-seryl-[protein] + ADP + H(+). It carries out the reaction L-threonyl-[protein] + ATP = O-phospho-L-threonyl-[protein] + ADP + H(+). Binds to sigma F and blocks its ability to form an RNA polymerase holoenzyme (E-sigma F). Phosphorylates SpoIIAA on a serine residue. This phosphorylation may enable SpoIIAA to act as an anti-anti-sigma factor that counteracts SpoIIAB and thus releases sigma F from inhibition. This chain is Anti-sigma F factor, found in Clostridium acetobutylicum (strain ATCC 824 / DSM 792 / JCM 1419 / IAM 19013 / LMG 5710 / NBRC 13948 / NRRL B-527 / VKM B-1787 / 2291 / W).